Reading from the N-terminus, the 217-residue chain is GRB2-related adapter protein (217 aa).

Positions 1–58 (MESVALYSFQATESDELAFNKGDTLKILNMEDDQNWYKAELRGAEGFVPKNYIRLKPH) constitute an SH3 1 domain. Residues 60–152 (WYSGRISRQL…KRQVFLQDEE (93 aa)) form the SH2 domain. In terms of domain architecture, SH3 2 spans 158–217 (PRACFAQAQFDFSAQDPSQLSFRRGDIIEVLERLDPSWWRGRLSGRIGFFPRSYVQPVHM).

It belongs to the GRB2/sem-5/DRK family. In terms of assembly, associates through its SH2 domain with ligand-activated receptors for stem cell factor (KIT) and erythropoietin (EPOR). Also forms a stable complex with the Bcr-Abl oncoprotein. GRAP is associated with the Ras guanine nucleotide exchange factor SOS1, primarily through its N-terminal SH3 domain. Interacts with phosphorylated LAT upon TCR activation. Interacts with SHB.

It localises to the membrane. It is found in the synapse. Its function is as follows. Couples signals from receptor and cytoplasmic tyrosine kinases to the Ras signaling pathway. Plays a role in the inner ear and in hearing. The chain is GRB2-related adapter protein (GRAP) from Bos taurus (Bovine).